Reading from the N-terminus, the 70-residue chain is Myotoxin (70 aa).

The signal sequence occupies residues 1 to 22 (MKILYLLFAFLFLAFLSEPGNA). Cystine bridges form between C26–C58, C33–C52, and C40–C59.

Belongs to the crotamine-myotoxin family. As to quaternary structure, monomer. In terms of tissue distribution, expressed by the venom gland.

It localises to the secreted. Functionally, cationic peptide that possesses multiple functions. It acts as a cell-penetrating peptide (CPP), and as a potent voltage-gated potassium channel (Kv) inhibitor. It exhibits antimicrobial activities, hind limb paralysis, and severe muscle necrosis by a non-enzymatic mechanism. This Crotalus adamanteus (Eastern diamondback rattlesnake) protein is Myotoxin.